We begin with the raw amino-acid sequence, 123 residues long: Small ribosomal subunit protein uS12cz/uS12cy (123 aa).

It belongs to the universal ribosomal protein uS12 family. As to quaternary structure, part of the 30S ribosomal subunit.

Its subcellular location is the plastid. The protein localises to the chloroplast. In terms of biological role, with S4 and S5 plays an important role in translational accuracy. Located at the interface of the 30S and 50S subunits. In Arabis hirsuta (Hairy rock-cress), this protein is Small ribosomal subunit protein uS12cz/uS12cy (rps12-A).